The chain runs to 499 residues: Cysteine--tRNA ligase (499 aa).

Residue Cys-29 coordinates Zn(2+). A 'HIGH' region motif is present at residues 31 to 41 (VTVYDLCHLGH). Zn(2+) contacts are provided by Cys-213, His-238, and Glu-242. A 'KMSKS' region motif is present at residues 270–274 (KMSKS). Lys-273 is an ATP binding site.

The protein belongs to the class-I aminoacyl-tRNA synthetase family. As to quaternary structure, monomer. Zn(2+) serves as cofactor.

It localises to the cytoplasm. The catalysed reaction is tRNA(Cys) + L-cysteine + ATP = L-cysteinyl-tRNA(Cys) + AMP + diphosphate. This chain is Cysteine--tRNA ligase, found in Synechococcus sp. (strain CC9902).